Reading from the N-terminus, the 229-residue chain is MTTAAVFGSTGAVGGQILATLLASDAFSSVKTVSRRLPNAQSPKLQTLEEGDITKWGGLIASLSPKPSIVFNAVGTTRAAAGGIANQWKIDHDLCIENAKAAKEAGVKTYVFISSGGTRGFFSRYVPYSKMKIGVEDAIKELDFEQAIILRPGLILQREKPKAALLENIVQNLNKLGQGVQDMIGQDQTVIGRAAVAAARMAEEGKAPSKYWVLEQADIVRLGRDEWKQ.

A mitochondrion-targeting transit peptide spans 1 to 45; that stretch reads MTTAAVFGSTGAVGGQILATLLASDAFSSVKTVSRRLPNAQSPKL.

This sequence belongs to the FMP52 family.

Its subcellular location is the mitochondrion outer membrane. The polypeptide is Protein fmp52-2, mitochondrial (fmp522) (Aspergillus oryzae (strain ATCC 42149 / RIB 40) (Yellow koji mold)).